The following is a 360-amino-acid chain: Membrane-bound lytic murein transglycosylase C (360 aa).

Positions 1–16 are cleaved as a signal peptide; it reads MKKLLALAVIAPLLIS. Cys-17 carries the N-palmitoyl cysteine lipid modification. Residue Cys-17 is the site of S-diacylglycerol cysteine attachment.

The protein belongs to the transglycosylase Slt family.

The protein localises to the cell outer membrane. The catalysed reaction is Exolytic cleavage of the (1-&gt;4)-beta-glycosidic linkage between N-acetylmuramic acid (MurNAc) and N-acetylglucosamine (GlcNAc) residues in peptidoglycan, from either the reducing or the non-reducing ends of the peptidoglycan chains, with concomitant formation of a 1,6-anhydrobond in the MurNAc residue.. Murein-degrading enzyme. May play a role in recycling of muropeptides during cell elongation and/or cell division. This chain is Membrane-bound lytic murein transglycosylase C, found in Salmonella arizonae (strain ATCC BAA-731 / CDC346-86 / RSK2980).